Reading from the N-terminus, the 159-residue chain is 2-C-methyl-D-erythritol 2,4-cyclodiphosphate synthase (159 aa).

Residues Asp10 and His12 each contribute to the a divalent metal cation site. Residues 10-12 and 37-38 each bind 4-CDP-2-C-methyl-D-erythritol 2-phosphate; these read DVH and HS. His45 contacts a divalent metal cation. Residues 59–61, 64–68, 103–109, 135–138, Phe142, and Arg145 contribute to the 4-CDP-2-C-methyl-D-erythritol 2-phosphate site; these read DIG, FPDTD, AQAPKML, and TTTE.

Belongs to the IspF family. Homotrimer. It depends on a divalent metal cation as a cofactor.

It catalyses the reaction 4-CDP-2-C-methyl-D-erythritol 2-phosphate = 2-C-methyl-D-erythritol 2,4-cyclic diphosphate + CMP. It participates in isoprenoid biosynthesis; isopentenyl diphosphate biosynthesis via DXP pathway; isopentenyl diphosphate from 1-deoxy-D-xylulose 5-phosphate: step 4/6. Functionally, involved in the biosynthesis of isopentenyl diphosphate (IPP) and dimethylallyl diphosphate (DMAPP), two major building blocks of isoprenoid compounds. Catalyzes the conversion of 4-diphosphocytidyl-2-C-methyl-D-erythritol 2-phosphate (CDP-ME2P) to 2-C-methyl-D-erythritol 2,4-cyclodiphosphate (ME-CPP) with a corresponding release of cytidine 5-monophosphate (CMP). The sequence is that of 2-C-methyl-D-erythritol 2,4-cyclodiphosphate synthase from Francisella tularensis subsp. novicida (strain U112).